The chain runs to 500 residues: MTEQVQDENKLIAERRAKLDSIRPNCSANAHPNTFRRTHKAAELQEKYGQNTKEELEALGFRTSIAGRIMAKRGPFLVIQDVSGRIQAYAEKGVQADLKDRYQGLDIGDIIGVTGQLHLSGKGDLYVNMEEYQLLTKALRPLPEKFHGLTDQETRYRQRYVDLIVNEESRQAFVMRSKVVAAIRNFMIKKEFMEVETPMMHVIPGGASARPFITHHNALDMPMYLRIAPELYLKRLVVGGFERVFEINRNFRNEGLSPRHNPEFTMMEFYMAYADYKDLMDLTEELLSSIAIELLGSAQMPYGEHTVDFGGPYARLSMLEAIQKYNPDNATIQAMTYEQVKDLEFMRELAISLGIKIEKFWTCGQLLEEIFGETAEWQLMQPTFITGYPADISPLARRNDDNHFITDRFEFFIGGREVANGFSELNDAEDQDSRFKAQVDAKDAGDDEAMFYDADYITALEHGLPPTAGQGIGIDRLVMLFTNTHTIRDVILFPAMRPQA.

Mg(2+) contacts are provided by E410 and E417.

The protein belongs to the class-II aminoacyl-tRNA synthetase family. As to quaternary structure, homodimer. Mg(2+) is required as a cofactor.

It is found in the cytoplasm. It carries out the reaction tRNA(Lys) + L-lysine + ATP = L-lysyl-tRNA(Lys) + AMP + diphosphate. This Shewanella putrefaciens (strain CN-32 / ATCC BAA-453) protein is Lysine--tRNA ligase.